Consider the following 565-residue polypeptide: Phospholipase B-like protein C (565 aa).

The first 21 residues, 1 to 21 (MNKIIILISLFLNFLFGYVVC), serve as a signal peptide directing secretion. N-linked (GlcNAc...) asparagine glycans are attached at residues asparagine 53, asparagine 84, asparagine 118, asparagine 200, asparagine 201, asparagine 211, asparagine 266, asparagine 302, asparagine 406, and asparagine 485.

This sequence belongs to the phospholipase B-like family.

It is found in the secreted. In terms of biological role, probable phospholipase. This chain is Phospholipase B-like protein C (plbC), found in Dictyostelium discoideum (Social amoeba).